A 256-amino-acid chain; its full sequence is Endonuclease NucS (256 aa).

The tract at residues 62–97 (AAKSAQHSRESVAGGAVDGDSATHSPESVAAGEPEK) is disordered.

Belongs to the NucS endonuclease family.

The protein resides in the cytoplasm. Functionally, cleaves both 3' and 5' ssDNA extremities of branched DNA structures. The sequence is that of Endonuclease NucS from Bifidobacterium longum (strain NCC 2705).